A 360-amino-acid chain; its full sequence is Metalloendoproteinase 5-MMP (360 aa).

The first 20 residues, 1-20, serve as a signal peptide directing secretion; it reads MRTLLLTILIFFFTVNPISA. The propeptide at 21–142 is activation peptide; sequence KFYTNVSSIP…GGKILRTTEK (122 aa). Asparagine 25, asparagine 36, and asparagine 78 each carry an N-linked (GlcNAc...) asparagine glycan. The Cysteine switch signature appears at 117 to 124; sequence PRCGNPDL. Residue cysteine 119 coordinates Zn(2+). Asparagine 168 and asparagine 191 each carry an N-linked (GlcNAc...) asparagine glycan. Histidine 270 is a binding site for Zn(2+). Glutamate 271 is an active-site residue. 2 residues coordinate Zn(2+): histidine 274 and histidine 280. The tract at residues 312–336 is disordered; the sequence is LYGGNPNGDGGGSKPSRESQSTGGD. A lipid anchor (GPI-anchor amidated serine) is attached at serine 337. A propeptide spans 338–360 (removed in mature form); that stretch reads VRRWRGWMISLSSIATCIFLISV.

Belongs to the peptidase M10A family. Matrix metalloproteinases (MMPs) subfamily. Zn(2+) is required as a cofactor. As to expression, mostly expressed in leaves, roots and stems, and, to a lower extent, in flowers.

The protein resides in the cell membrane. Its activity is regulated as follows. Repressed by acetohydroxamic acid (AHA). Matrix metalloproteinases (MMPs) or matrixins may play a role in the degradation and remodeling of the extracellular matrix (ECM) during development or in response to stresses. Active on Mca-KESAbuNLFVLKDpaR-NH(2) (QF75) and, to some extent, on McaPLGLDpaAR-NH(2) (QF24), myelin basic protein (MBP) and beta-casein. The polypeptide is Metalloendoproteinase 5-MMP (Arabidopsis thaliana (Mouse-ear cress)).